Reading from the N-terminus, the 352-residue chain is Uroporphyrinogen decarboxylase (352 aa).

Substrate-binding positions include Arg27 to Arg31, Asp77, Tyr154, Thr209, and His325.

Belongs to the uroporphyrinogen decarboxylase family. In terms of assembly, homodimer.

Its subcellular location is the cytoplasm. The catalysed reaction is uroporphyrinogen III + 4 H(+) = coproporphyrinogen III + 4 CO2. It participates in porphyrin-containing compound metabolism; protoporphyrin-IX biosynthesis; coproporphyrinogen-III from 5-aminolevulinate: step 4/4. Functionally, catalyzes the decarboxylation of four acetate groups of uroporphyrinogen-III to yield coproporphyrinogen-III. The chain is Uroporphyrinogen decarboxylase from Legionella pneumophila (strain Lens).